Reading from the N-terminus, the 319-residue chain is Non-homologous end joining protein Ku (319 aa).

Residues 10 to 188 (ISFGLVTVPI…PQGIELSEDE (179 aa)) form the Ku domain. The tract at residues 252–319 (QSVAKAKASR…TTPKKPRRSA (68 aa)) is disordered. Positions 260–274 (SRGESGEADVHELPR) are enriched in basic and acidic residues. A compositionally biased stretch (basic residues) spans 305–319 (TAAKKTTPKKPRRSA).

This sequence belongs to the prokaryotic Ku family. Homodimer. Interacts with LigD.

With LigD forms a non-homologous end joining (NHEJ) DNA repair enzyme, which repairs dsDNA breaks with reduced fidelity. Binds linear dsDNA with 5'- and 3'- overhangs but not closed circular dsDNA nor ssDNA. Recruits and stimulates the ligase activity of LigD. The polypeptide is Non-homologous end joining protein Ku (Streptomyces avermitilis (strain ATCC 31267 / DSM 46492 / JCM 5070 / NBRC 14893 / NCIMB 12804 / NRRL 8165 / MA-4680)).